Reading from the N-terminus, the 308-residue chain is Methionyl-tRNA formyltransferase (308 aa).

Residue 107–110 (SLLP) participates in (6S)-5,6,7,8-tetrahydrofolate binding.

This sequence belongs to the Fmt family.

It carries out the reaction L-methionyl-tRNA(fMet) + (6R)-10-formyltetrahydrofolate = N-formyl-L-methionyl-tRNA(fMet) + (6S)-5,6,7,8-tetrahydrofolate + H(+). Attaches a formyl group to the free amino group of methionyl-tRNA(fMet). The formyl group appears to play a dual role in the initiator identity of N-formylmethionyl-tRNA by promoting its recognition by IF2 and preventing the misappropriation of this tRNA by the elongation apparatus. The protein is Methionyl-tRNA formyltransferase of Carboxydothermus hydrogenoformans (strain ATCC BAA-161 / DSM 6008 / Z-2901).